A 180-amino-acid polypeptide reads, in one-letter code: Der GTPase-activating protein YihI (180 aa).

Over residues 1–10 (MKQPARTSQV) the composition is skewed to polar residues. Disordered regions lie at residues 1-102 (MKQP…PRLT) and 158-180 (DAEDEKAEEDMYRLLKGSHRTPE). Over residues 21 to 32 (TREEINQEARDR) the composition is skewed to basic and acidic residues. Positions 45–54 (SRANPATVSQ) are enriched in polar residues. The span at 55 to 67 (KGDKSQSVKDPRI) shows a compositional bias: basic and acidic residues. Low complexity predominate over residues 84 to 93 (PANPVKAAKP).

Belongs to the YihI family. In terms of assembly, interacts with Der.

A GTPase-activating protein (GAP) that modifies Der/EngA GTPase function. May play a role in ribosome biogenesis. The polypeptide is Der GTPase-activating protein YihI (Erwinia tasmaniensis (strain DSM 17950 / CFBP 7177 / CIP 109463 / NCPPB 4357 / Et1/99)).